The following is a 444-amino-acid chain: Adenylosuccinate synthetase (444 aa).

Residues Gly-12–Lys-18 and Gly-40–Thr-42 each bind GTP. The active-site Proton acceptor is Asp-13. Mg(2+)-binding residues include Asp-13 and Gly-40. IMP is bound by residues Asp-13–Lys-16, Asn-38–His-41, Thr-128, Arg-142, Gln-223, Thr-238, and Arg-302. His-41 (proton donor) is an active-site residue. Residue Thr-298–Arg-304 participates in substrate binding. Residues Arg-304, Lys-330–Asp-332, and Ser-412–Gly-414 each bind GTP.

It belongs to the adenylosuccinate synthetase family. As to quaternary structure, homodimer. Requires Mg(2+) as cofactor.

The protein localises to the cytoplasm. It catalyses the reaction IMP + L-aspartate + GTP = N(6)-(1,2-dicarboxyethyl)-AMP + GDP + phosphate + 2 H(+). It functions in the pathway purine metabolism; AMP biosynthesis via de novo pathway; AMP from IMP: step 1/2. In terms of biological role, plays an important role in the de novo pathway of purine nucleotide biosynthesis. Catalyzes the first committed step in the biosynthesis of AMP from IMP. This is Adenylosuccinate synthetase from Synechococcus elongatus (strain ATCC 33912 / PCC 7942 / FACHB-805) (Anacystis nidulans R2).